We begin with the raw amino-acid sequence, 210 residues long: MALPQMCDGSHLASTLRYCMTVSGTVVLVAGTLCFAWWSEGDATAQPGQLAPPTEYPVPEGPSPLLRSVSFVCCGAGGLLLLIGLLWSVKASIPGPPRWDPYHLSRDLYYLTVESSEKESCRTPKVVDIPTYEEAVSFPVAEGPPTPPAYPTEEALEPSGSRDALLSTQPAWPPPSYESISLALDAVSAETTPSATRSCSGLVQTARGGS.

A run of 2 helical transmembrane segments spans residues 18–38 (YCMT…FAWW) and 69–89 (VSFV…LWSV). The tract at residues 140–172 (VAEGPPTPPAYPTEEALEPSGSRDALLSTQPAW) is disordered.

The protein localises to the membrane. This chain is Transmembrane protein 61 (TMEM61), found in Homo sapiens (Human).